The chain runs to 805 residues: Leucine--tRNA ligase (805 aa).

The 'HIGH' region motif lies at 40-51 (PYPSGAGLHVGH). A 'KMSKS' region motif is present at residues 576–580 (KMSKS). Residue Lys-579 participates in ATP binding.

It belongs to the class-I aminoacyl-tRNA synthetase family.

Its subcellular location is the cytoplasm. It catalyses the reaction tRNA(Leu) + L-leucine + ATP = L-leucyl-tRNA(Leu) + AMP + diphosphate. This chain is Leucine--tRNA ligase, found in Geobacillus kaustophilus (strain HTA426).